The chain runs to 324 residues: MSSLYTLWQQFYPPAPTFTEKDVGAGSQVGKVFIITGANSGIGYALVKLLYPTGATIYVAGRSPQKIQTAINEITSVSPSPSTPATLKPLHLDLDDLTSIKAAAAAFAAQESRLDIIWNNAGGGYPVGSVSKQGIEAHMGSHCVAPLLFTNELLPLLRAAARTAPKDSVRVVWTGSAQIQLNAPQGGVDFARVEKPTTHDMQDYGAAKAGNWFLAVEGARRWGKDGIVSVCQNPGNLSTPIYDIFGWFMLALIRGLFLYDAKYGAYTMLFSGFSPEVNKGTNGAYIWPFGRIKPPPRADVLQAGSEGKAKEFWEWCERSWKKHV.

Isoleucine 42, lysine 66, aspartate 93, asparagine 120, tyrosine 204, lysine 208, and threonine 239 together coordinate NADP(+). Tyrosine 204 acts as the Proton donor in catalysis. Catalysis depends on lysine 208, which acts as the Lowers pKa of active site Tyr.

It belongs to the short-chain dehydrogenases/reductases (SDR) family.

Its pathway is secondary metabolite biosynthesis. Its function is as follows. Short-chain dehydrogenase/reductase; part of the gene cluster that mediates the biosynthesis of iso-A82775C, a enylepoxycyclohexane and biosynthetic precursor of the chloropestolide anticancer natural products. Within the cluster, the prenyltransferase iacE prenylates siccayne to generate pestalodiol E, using dimethylallyl diphosphate (DMAPP) as cosubstrate. The probable oxidoreductase iacF is then involved in the epoxidation of pestalodiol F to pestalodiol F, which is further converted to pestalofone A by the short-chain dehydrogenase/reductase iacG. Iso-A82775C is subsequently generated from pestalofone A by the short-chain dehydrogenase/reductase iacC. Iso-A82775C is further condensed with maldoxin via a Diels-Alder reaction to produce the anticancer natural products chloropestolides A to E. The sequence is that of Short-chain dehydrogenase/reductase iacJ from Pestalotiopsis fici (strain W106-1 / CGMCC3.15140).